The following is a 298-amino-acid chain: HTH-type transcriptional regulator TsaR (298 aa).

Residues 1 to 58 form the HTH lysR-type domain; the sequence is MKLQTLQALICIEEVGSLRAAAQLLHLSQPALSAAIQQLEDELKAPLLVRTKRGVSLT. Residues 18–37 constitute a DNA-binding region (H-T-H motif); the sequence is LRAAAQLLHLSQPALSAAIQ. Residues Ser-98 and Ala-100 each coordinate toluene-4-sulfonate.

This sequence belongs to the LysR transcriptional regulatory family. As to quaternary structure, homotetramer. Dimer of dimers related by a twofold axis.

Sensitive to oxygen. Its function is as follows. Regulates expression of the tsaMBCD1 operon and of tsaT in response to p-toluenesulfonate (TSA). Acts by binding directly to the promoter region. Binding to the tsa promoter depends on TSA concentration. This Comamonas testosteroni (Pseudomonas testosteroni) protein is HTH-type transcriptional regulator TsaR (tsaR).